A 229-amino-acid chain; its full sequence is Enolase-phosphatase E1 (229 aa).

Belongs to the HAD-like hydrolase superfamily. MasA/MtnC family. In terms of assembly, monomer. It depends on Mg(2+) as a cofactor.

It carries out the reaction 5-methylsulfanyl-2,3-dioxopentyl phosphate + H2O = 1,2-dihydroxy-5-(methylsulfanyl)pent-1-en-3-one + phosphate. It functions in the pathway amino-acid biosynthesis; L-methionine biosynthesis via salvage pathway; L-methionine from S-methyl-5-thio-alpha-D-ribose 1-phosphate: step 3/6. It participates in amino-acid biosynthesis; L-methionine biosynthesis via salvage pathway; L-methionine from S-methyl-5-thio-alpha-D-ribose 1-phosphate: step 4/6. Its function is as follows. Bifunctional enzyme that catalyzes the enolization of 2,3-diketo-5-methylthiopentyl-1-phosphate (DK-MTP-1-P) into the intermediate 2-hydroxy-3-keto-5-methylthiopentenyl-1-phosphate (HK-MTPenyl-1-P), which is then dephosphorylated to form the acireductone 1,2-dihydroxy-3-keto-5-methylthiopentene (DHK-MTPene). The sequence is that of Enolase-phosphatase E1 from Erwinia tasmaniensis (strain DSM 17950 / CFBP 7177 / CIP 109463 / NCPPB 4357 / Et1/99).